The following is a 499-amino-acid chain: Gamma-aminobutyric acid receptor subunit beta (499 aa).

Residues 1 to 23 (MWGIIVPFFSASLMCSLVAVVRC) form the signal peptide. The Extracellular portion of the chain corresponds to 24-251 (QQDTDHFANV…IFQLQRNIGY (228 aa)). N32, N98, N106, and N152 each carry an N-linked (GlcNAc...) asparagine glycan. C167 and C181 are joined by a disulfide. 3 consecutive transmembrane segments (helical) span residues 252-273 (FIFQ…SFWI), 278-299 (TSAR…SNGV), and 311-333 (AIDI…YAAV). The Cytoplasmic segment spans residues 334 to 475 (NYTYWGARAK…RVQDVNTIDK (142 aa)). A helical membrane pass occupies residues 476 to 499 (YARLMFPLLFIIFNTSYWSVYLLT).

It belongs to the ligand-gated ion channel (TC 1.A.9) family. Gamma-aminobutyric acid receptor (TC 1.A.9.5) subfamily. As to quaternary structure, generally pentameric. There are five types of GABA(A) receptor chains: alpha, beta, gamma, delta, and rho.

It localises to the postsynaptic cell membrane. The protein resides in the cell membrane. Its function is as follows. GABA, an inhibitory neurotransmitter, mediates neuronal inhibition by binding to the GABA/benzodiazepine receptor and opening an integral chloride channel. The sequence is that of Gamma-aminobutyric acid receptor subunit beta from Lymnaea stagnalis (Great pond snail).